Here is a 320-residue protein sequence, read N- to C-terminus: tRNA U34 carboxymethyltransferase (320 aa).

Residues Lys89, Trp103, Lys108, Gly128, 150–152 (DPT), 179–180 (IE), Met194, Tyr198, and Arg313 contribute to the carboxy-S-adenosyl-L-methionine site.

The protein belongs to the class I-like SAM-binding methyltransferase superfamily. CmoB family. In terms of assembly, homotetramer.

It carries out the reaction carboxy-S-adenosyl-L-methionine + 5-hydroxyuridine(34) in tRNA = 5-carboxymethoxyuridine(34) in tRNA + S-adenosyl-L-homocysteine + H(+). In terms of biological role, catalyzes carboxymethyl transfer from carboxy-S-adenosyl-L-methionine (Cx-SAM) to 5-hydroxyuridine (ho5U) to form 5-carboxymethoxyuridine (cmo5U) at position 34 in tRNAs. The protein is tRNA U34 carboxymethyltransferase of Glaesserella parasuis serovar 5 (strain SH0165) (Haemophilus parasuis).